Reading from the N-terminus, the 523-residue chain is UPF0329 protein ECU02_0050 (523 aa).

The interval 326–386 is disordered; sequence EEKAKSKKRG…KTGKKSEGGR (61 aa). Residues 330 to 339 show a composition bias toward basic residues; it reads KSKKRGKRKS. The segment covering 344 to 353 has biased composition (basic and acidic residues); that stretch reads EAKEEEKKES. The span at 354 to 368 shows a compositional bias: acidic residues; the sequence is ETEEVEAGEEVEMPS.

The protein belongs to the UPF0329 family.

In Encephalitozoon cuniculi (strain GB-M1) (Microsporidian parasite), this protein is UPF0329 protein ECU02_0050.